We begin with the raw amino-acid sequence, 2161 residues long: DNA polymerase epsilon catalytic subunit A (2161 aa).

Short sequence motifs (nuclear localization signal) lie at residues 5–12 (NRRRDRKD), 1137–1144 (HKKVREKD), and 1239–1246 (LKKRKWKV). 4 residues coordinate Zn(2+): Cys2038, Cys2041, Cys2063, and Cys2068. A CysA-type zinc finger spans residues 2038 to 2068 (CSNCDAYRDLDICRDPALLTEKEWSCADTQC). 4 residues coordinate [4Fe-4S] cluster: Cys2099, Cys2102, Cys2114, and Cys2116. A CysB motif motif is present at residues 2099-2116 (CIRCNQVKAAHLTEQCEC). Positions 2130-2137 (SKRMEIFM) match the Nuclear localization signal 4 motif.

It belongs to the DNA polymerase type-B family. In terms of assembly, heterotetramer. Subunit of the DNA polymerase II. Interacts (via C-terminus) with DPB2. Interacts with LHP1/TFL2. Requires [4Fe-4S] cluster as cofactor. In terms of tissue distribution, mostly expressed at low levels in inflorescence (floral meristem and flowers until anthesis), and, to a lower extent, in roots, seeds and leaves.

The protein resides in the nucleus. The enzyme catalyses DNA(n) + a 2'-deoxyribonucleoside 5'-triphosphate = DNA(n+1) + diphosphate. Its function is as follows. DNA polymerase II, which participates in chromosomal DNA replication. Required for the timing and determination of cell fate during plant embryogenesis and root pole development, by promoting cell cycle and cell type patterning. Necessary for proper shoot (SAM) and root apical meristem (RAM) functions. Involved in maintaining epigenetic states, controlling hypersensitive response (HR), and mediating abscisic acid (ABA) signaling. Required for flowering repression through a mechanism involving epigenetic gene silencing. May participate in processes involved in chromatin-mediated cellular memory. In Arabidopsis thaliana (Mouse-ear cress), this protein is DNA polymerase epsilon catalytic subunit A (POL2A).